Here is a 426-residue protein sequence, read N- to C-terminus: Glutamyl-tRNA reductase (426 aa).

Residues 50–53, Ser-108, 113–115, and Gln-119 contribute to the substrate site; these read TCNR and EPQ. Residue Cys-51 is the Nucleophile of the active site. 188-193 contributes to the NADP(+) binding site; the sequence is GAGEMI.

The protein belongs to the glutamyl-tRNA reductase family. In terms of assembly, homodimer.

It carries out the reaction (S)-4-amino-5-oxopentanoate + tRNA(Glu) + NADP(+) = L-glutamyl-tRNA(Glu) + NADPH + H(+). It functions in the pathway porphyrin-containing compound metabolism; protoporphyrin-IX biosynthesis; 5-aminolevulinate from L-glutamyl-tRNA(Glu): step 1/2. Its function is as follows. Catalyzes the NADPH-dependent reduction of glutamyl-tRNA(Glu) to glutamate 1-semialdehyde (GSA). This chain is Glutamyl-tRNA reductase, found in Polaromonas sp. (strain JS666 / ATCC BAA-500).